A 207-amino-acid polypeptide reads, in one-letter code: MAAKETKELPPFEYPQGYHCIAGVDEVGRGPLVGDVVTAAVILDPNNPIEGLNDSKKLSEKKRLALLPEIQEKALAWAVGRCSPEEIDQLNILQATMVAMQRAVEGLAVKPDLVLIDGNRCPALPMDSQAVVKGDLRVAQISAASIIAKVVRDQEMEELDKQYPQFGFAQHKGYPTKAHFDAIEKHGVIEQHRKSFKPVKKALGIEE.

An RNase H type-2 domain is found at 19-207 (HCIAGVDEVG…PVKKALGIEE (189 aa)). A divalent metal cation-binding residues include Asp25, Glu26, and Asp117.

It belongs to the RNase HII family. It depends on Mn(2+) as a cofactor. Mg(2+) serves as cofactor.

The protein resides in the cytoplasm. It carries out the reaction Endonucleolytic cleavage to 5'-phosphomonoester.. Endonuclease that specifically degrades the RNA of RNA-DNA hybrids. This is Ribonuclease HII from Vibrio vulnificus (strain CMCP6).